The following is a 391-amino-acid chain: Phosphoglycerate kinase (391 aa).

Residues 21 to 23, Arg-36, 59 to 62, Arg-113, and Arg-146 each bind substrate; these read DLN and HLGR. ATP contacts are provided by residues Lys-197, Glu-319, and 345–348; that span reads GGDT.

It belongs to the phosphoglycerate kinase family. Monomer.

Its subcellular location is the cytoplasm. The catalysed reaction is (2R)-3-phosphoglycerate + ATP = (2R)-3-phospho-glyceroyl phosphate + ADP. Its pathway is carbohydrate degradation; glycolysis; pyruvate from D-glyceraldehyde 3-phosphate: step 2/5. In Shewanella sp. (strain ANA-3), this protein is Phosphoglycerate kinase.